Reading from the N-terminus, the 428-residue chain is Serine--tRNA ligase (428 aa).

235–237 (TAE) is a binding site for L-serine. 266–268 (RSE) contacts ATP. E289 lines the L-serine pocket. 353-356 (EISS) is a binding site for ATP. Residue S389 coordinates L-serine.

This sequence belongs to the class-II aminoacyl-tRNA synthetase family. Type-1 seryl-tRNA synthetase subfamily. Homodimer. The tRNA molecule binds across the dimer.

Its subcellular location is the cytoplasm. The enzyme catalyses tRNA(Ser) + L-serine + ATP = L-seryl-tRNA(Ser) + AMP + diphosphate + H(+). It catalyses the reaction tRNA(Sec) + L-serine + ATP = L-seryl-tRNA(Sec) + AMP + diphosphate + H(+). The protein operates within aminoacyl-tRNA biosynthesis; selenocysteinyl-tRNA(Sec) biosynthesis; L-seryl-tRNA(Sec) from L-serine and tRNA(Sec): step 1/1. Functionally, catalyzes the attachment of serine to tRNA(Ser). Is also able to aminoacylate tRNA(Sec) with serine, to form the misacylated tRNA L-seryl-tRNA(Sec), which will be further converted into selenocysteinyl-tRNA(Sec). The sequence is that of Serine--tRNA ligase from Pasteurella multocida (strain Pm70).